The chain runs to 151 residues: MAKINFYAEGVSLPRIRRRIVGKWIAEVCSRYGKAVGEISYLFCDDEYILKANQEFLDHDYYTDIITFDSCEADTVNGDLLISLDTVRSNARALDLRYEDELHRVIIHGILHLCGLKDKSKKDEAQMRAAEEEALVMLQETIGSELSLLHT.

Zn(2+)-binding residues include His108, His112, and Asp118.

The protein belongs to the endoribonuclease YbeY family. Zn(2+) serves as cofactor.

Its subcellular location is the cytoplasm. In terms of biological role, single strand-specific metallo-endoribonuclease involved in late-stage 70S ribosome quality control and in maturation of the 3' terminus of the 16S rRNA. In Porphyromonas gingivalis (strain ATCC 33277 / DSM 20709 / CIP 103683 / JCM 12257 / NCTC 11834 / 2561), this protein is Endoribonuclease YbeY.